Reading from the N-terminus, the 157-residue chain is Transcription elongation factor GreA (157 aa).

Residues 10 to 76 (THEGKQKLEQ…TLENMIRNAK (67 aa)) are a coiled coil.

It belongs to the GreA/GreB family.

Necessary for efficient RNA polymerase transcription elongation past template-encoded arresting sites. The arresting sites in DNA have the property of trapping a certain fraction of elongating RNA polymerases that pass through, resulting in locked ternary complexes. Cleavage of the nascent transcript by cleavage factors such as GreA or GreB allows the resumption of elongation from the new 3'terminus. GreA releases sequences of 2 to 3 nucleotides. The sequence is that of Transcription elongation factor GreA from Bacillus velezensis (strain DSM 23117 / BGSC 10A6 / LMG 26770 / FZB42) (Bacillus amyloliquefaciens subsp. plantarum).